A 156-amino-acid chain; its full sequence is SsrA-binding protein (156 aa).

Belongs to the SmpB family.

The protein localises to the cytoplasm. Its function is as follows. Required for rescue of stalled ribosomes mediated by trans-translation. Binds to transfer-messenger RNA (tmRNA), required for stable association of tmRNA with ribosomes. tmRNA and SmpB together mimic tRNA shape, replacing the anticodon stem-loop with SmpB. tmRNA is encoded by the ssrA gene; the 2 termini fold to resemble tRNA(Ala) and it encodes a 'tag peptide', a short internal open reading frame. During trans-translation Ala-aminoacylated tmRNA acts like a tRNA, entering the A-site of stalled ribosomes, displacing the stalled mRNA. The ribosome then switches to translate the ORF on the tmRNA; the nascent peptide is terminated with the 'tag peptide' encoded by the tmRNA and targeted for degradation. The ribosome is freed to recommence translation, which seems to be the essential function of trans-translation. This Clostridium beijerinckii (strain ATCC 51743 / NCIMB 8052) (Clostridium acetobutylicum) protein is SsrA-binding protein.